A 205-amino-acid chain; its full sequence is Polyamine-modulated factor 1 (205 aa).

The interval 1–30 (MAEASSANLGSGCEEKRHEGSSSESVPPGT) is disordered. A coiled-coil region spans residues 141–193 (FLQQRDTLRRHVQKQEAENQQLADAVLAGRRQVEELQLQVQAQQQAWQALHRE).

Component of the MIS12 complex composed of MIS12, DSN1, NSL1 and PMF1. Interacts with COPS7A. Interacts via its coiled-coil domain with the leucine-zipper domain of NFE2L2. The interaction with NFE2L2 is required for the transcriptional regulation of SSAT. Highest levels of expression in heart and skeletal muscle, with significant levels expressed in kidney and liver.

The protein resides in the nucleus. It localises to the chromosome. Its subcellular location is the centromere. It is found in the kinetochore. Its function is as follows. Part of the MIS12 complex which is required for normal chromosome alignment and segregation and kinetochore formation during mitosis. May act as a cotranscription partner of NFE2L2 involved in regulation of polyamine-induced transcription of SSAT. This chain is Polyamine-modulated factor 1, found in Homo sapiens (Human).